A 228-amino-acid chain; its full sequence is uncharacterized protein (228 aa).

The N-terminal stretch at 1–16 (MILLLLALISATTAFQ) is a signal peptide. Residues 206–225 (LFQTLFFVTLSFLVGSAFAL) form a helical membrane-spanning segment.

To A.fulgidus AF_1225.

It is found in the membrane. This is an uncharacterized protein from Archaeoglobus fulgidus (strain ATCC 49558 / DSM 4304 / JCM 9628 / NBRC 100126 / VC-16).